Here is a 758-residue protein sequence, read N- to C-terminus: Glucocorticoid receptor (758 aa).

Disordered regions lie at residues 1 to 61 (MDPG…SANG) and 349 to 382 (GMSS…PSGP). Positions 1–386 (MDPGGLKHSK…AKPSGPTHKI (386 aa)) are modulating. Low complexity predominate over residues 26–42 (GSFSGDTGGSKSTTSTS). 2 consecutive NR C4-type zinc fingers follow at residues 387–407 (CLVC…CGSC) and 432–456 (CAGR…FRKC). Positions 387–461 (CLVCSDEASG…RFRKCLQAGM (75 aa)) form a DNA-binding region, nuclear receptor. The tract at residues 462 to 498 (NLEARKNKKLIRLKGQQTTMEPNPPPPDERACALIPK) is hinge. The region spanning 499–733 (SMPQLVPTML…FPEMLAEIIS (235 aa)) is the NR LBD domain.

The protein belongs to the nuclear hormone receptor family. NR3 subfamily. Heteromultimeric cytoplasmic complex with HSP90AA1, HSPA1A/HSPA1B, and FKBP5 or another immunophilin such as PPID, STIP1, or the immunophilin homolog PPP5C. Upon ligand binding FKBP5 dissociates from the complex and FKBP4 takes its place, thereby linking the complex to dynein and mediating transport to the nucleus, where the complex dissociates. Directly interacts with UNC45A. Binds to DNA as a homodimer, and as heterodimer with NR3C2 or the retinoid X receptor. Binds STAT5A and STAT5B homodimers and heterodimers. Interacts with NRIP1, POU2F1, POU2F2 and TRIM28. Interacts with several coactivator complexes, including the SMARCA4 complex, CREBBP/EP300, TADA2L (Ada complex) and p160 coactivators such as NCOA2 and NCOA6. Interaction with BAG1 inhibits transactivation. Interacts with HEXIM1, PELP1 and TGFB1I1. Interacts with NCOA1, NCOA3, SMARCA4, SMARCC1, SMARCD1, and SMARCE1. In terms of processing, phosphorylated in the absence of hormone; becomes hyperphosphorylated in the presence of glucocorticoids. May be dephosphorylated by PPP5C, attenuates NR3C1 action. Isoform 1 is expressed in all tissues tested including liver, gills, intestine, skeletal muscle, kidney, heart, spleen, stomach, brain, pituitary, ovary, testis, skin and bladder. Isoform 2 is found only in testis.

It is found in the cytoplasm. The protein localises to the nucleus. The protein resides in the mitochondrion. It localises to the cytoskeleton. Its subcellular location is the spindle. It is found in the microtubule organizing center. The protein localises to the centrosome. Functionally, receptor for glucocorticoids (GC). Has a dual mode of action: as a transcription factor that binds to glucocorticoid response elements (GRE), both for nuclear and mitochondrial DNA, and as a modulator of other transcription factors. Affects inflammatory responses, cellular proliferation and differentiation in target tissues. Involved in chromatin remodeling. Plays a role in rapid mRNA degradation by binding to the 5' UTR of target mRNAs and interacting with PNRC2 in a ligand-dependent manner which recruits the RNA helicase UPF1 and the mRNA-decapping enzyme DCP1A, leading to RNA decay. Could act as a coactivator for STAT5-dependent transcription upon growth hormone (GH) stimulation and could reveal an essential role of hepatic GR in the control of body growth. Mediates glucocorticoid-induced apoptosis. Promotes accurate chromosome segregation during mitosis. May act as a tumor suppressor. May play a negative role in adipogenesis through the regulation of lipolytic and antilipogenic gene expression. The chain is Glucocorticoid receptor (nr3c1) from Oncorhynchus mykiss (Rainbow trout).